We begin with the raw amino-acid sequence, 629 residues long: tRNA uridine 5-carboxymethylaminomethyl modification enzyme MnmG (629 aa).

FAD contacts are provided by residues 13–18 (GGGHAG), valine 125, and serine 180. Residue 273–287 (GPRYCPSIEDKVMRF) participates in NAD(+) binding. Glutamine 370 is a binding site for FAD.

Belongs to the MnmG family. In terms of assembly, homodimer. Heterotetramer of two MnmE and two MnmG subunits. It depends on FAD as a cofactor.

The protein resides in the cytoplasm. Its function is as follows. NAD-binding protein involved in the addition of a carboxymethylaminomethyl (cmnm) group at the wobble position (U34) of certain tRNAs, forming tRNA-cmnm(5)s(2)U34. This chain is tRNA uridine 5-carboxymethylaminomethyl modification enzyme MnmG, found in Salmonella choleraesuis (strain SC-B67).